Here is a 525-residue protein sequence, read N- to C-terminus: Neuropilin and tolloid-like protein 2 (525 aa).

The N-terminal stretch at 1–22 is a signal peptide; that stretch reads MALERLCSVLKVLLITVLVVEG. Topologically, residues 23 to 347 are extracellular; it reads IAVAQKTQDG…GVFEQITKTH (325 aa). 7 disulfides stabilise this stretch: Cys-45-Cys-72, Cys-100-Cys-122, Cys-177-Cys-207, Cys-234-Cys-256, Cys-297-Cys-309, Cys-304-Cys-322, and Cys-316-Cys-331. CUB domains lie at 45–159 and 177–292; these read CGIW…YSFI and CQFE…FTSF. One can recognise an LDL-receptor class A domain in the interval 296–332; it reads PCTSSTFFCHSNMCINNSLVCNGVQNCAYPWDENHCK. Residue Asn-311 is glycosylated (N-linked (GlcNAc...) asparagine). A helical transmembrane segment spans residues 348 to 368; the sequence is GTIIGITSGIVLVLLIISILV. Residues 369-525 lie on the Cytoplasmic side of the membrane; the sequence is QVKQPRKKVM…SAQASISIDF (157 aa). Position 409 is a phosphoserine (Ser-409).

As to quaternary structure, interacts with GRIK2 and GRIK3, but neither with AMPA-nor with NMDA-sensitive glutamate receptors. Post-translationally, N-glycosylated.

It is found in the membrane. Functionally, accessory subunit of neuronal kainate-sensitive glutamate receptors, GRIK2 and GRIK3. Increases kainate-receptor channel activity, slowing the decay kinetics of the receptors, without affecting their expression at the cell surface, and increasing the open probability of the receptor channels. Modulates the agonist sensitivity of kainate receptors. Slows the decay of kainate receptor-mediated excitatory postsynaptic currents (EPSCs), thus directly influencing synaptic transmission. The sequence is that of Neuropilin and tolloid-like protein 2 (NETO2) from Homo sapiens (Human).